The chain runs to 273 residues: Putative B3 domain-containing protein At5g58280 (273 aa).

Residues 127–218 (FVKSMVRSHV…KFKIYVFKGN (92 aa)) constitute a DNA-binding region (TF-B3). The tract at residues 225-273 (SARKRGRATTPSEEEEEEEDKDVEESGDEEHSSRATKRSSVRLLRKRKA) is disordered. Over residues 236–252 (SEEEEEEEDKDVEESGD) the composition is skewed to acidic residues. Over residues 258–273 (RATKRSSVRLLRKRKA) the composition is skewed to basic residues.

It is found in the nucleus. This Arabidopsis thaliana (Mouse-ear cress) protein is Putative B3 domain-containing protein At5g58280.